The primary structure comprises 81 residues: Costars family protein ABRACL (81 aa).

This sequence belongs to the costars family.

This Xenopus tropicalis (Western clawed frog) protein is Costars family protein ABRACL (abracl).